Reading from the N-terminus, the 585-residue chain is Cytochrome c lysine N-methyltransferase 1 (585 aa).

An SET domain is found at 18 to 273 (KSLSLKPSTI…KPIEVFISYS (256 aa)). The interval 186 to 288 (LNLSDIKHLY…FSMLVTYGFT (103 aa)) is SET-like.

It belongs to the class V-like SAM-binding methyltransferase superfamily.

Its subcellular location is the cytoplasm. The protein resides in the cytosol. The catalysed reaction is L-lysyl-[cytochrome c] + S-adenosyl-L-methionine = N(6)-methyl-L-lysyl-[cytochrome c] + S-adenosyl-L-homocysteine + H(+). Functionally, methyltransferase which mediates trimethylation of 'Lys-78' of cytochrome c (CYC1). The chain is Cytochrome c lysine N-methyltransferase 1 (CTM1) from Saccharomyces cerevisiae (strain ATCC 204508 / S288c) (Baker's yeast).